We begin with the raw amino-acid sequence, 225 residues long: NAD(P)H-quinone oxidoreductase subunit K, chloroplastic (225 aa).

Positions 43, 44, 108, and 139 each coordinate [4Fe-4S] cluster.

Belongs to the complex I 20 kDa subunit family. As to quaternary structure, NDH is composed of at least 16 different subunits, 5 of which are encoded in the nucleus. The cofactor is [4Fe-4S] cluster.

It is found in the plastid. It localises to the chloroplast thylakoid membrane. The enzyme catalyses a plastoquinone + NADH + (n+1) H(+)(in) = a plastoquinol + NAD(+) + n H(+)(out). It catalyses the reaction a plastoquinone + NADPH + (n+1) H(+)(in) = a plastoquinol + NADP(+) + n H(+)(out). In terms of biological role, NDH shuttles electrons from NAD(P)H:plastoquinone, via FMN and iron-sulfur (Fe-S) centers, to quinones in the photosynthetic chain and possibly in a chloroplast respiratory chain. The immediate electron acceptor for the enzyme in this species is believed to be plastoquinone. Couples the redox reaction to proton translocation, and thus conserves the redox energy in a proton gradient. The polypeptide is NAD(P)H-quinone oxidoreductase subunit K, chloroplastic (Nuphar advena (Common spatterdock)).